A 145-amino-acid polypeptide reads, in one-letter code: Probable inactive ribonuclease-like protein 12 (145 aa).

Positions 1-19 (MILMVIVFLLLLFWENELT) are cleaved as a signal peptide. The N-linked (GlcNAc...) asparagine glycan is linked to Asn88.

It belongs to the pancreatic ribonuclease family.

The protein resides in the secreted. Does not exhibit any ribonuclease activity. The sequence is that of Probable inactive ribonuclease-like protein 12 (Rnase12) from Rattus norvegicus (Rat).